A 549-amino-acid polypeptide reads, in one-letter code: Probable protein kinase UbiB (549 aa).

In terms of domain architecture, Protein kinase spans 123–501; it reads DFNETPLASA…QQQAHKSNYL (379 aa). Residues 129 to 137 and K152 each bind ATP; that span reads LASASISQV. D287 serves as the catalytic Proton acceptor. The next 2 helical transmembrane spans lie at 498–518 and 520–540; these read SNYLLITSAILLICGTLLFNQ and ATLWSPYVCLISGAALWIIGW.

The protein belongs to the ABC1 family. UbiB subfamily.

Its subcellular location is the cell inner membrane. It participates in cofactor biosynthesis; ubiquinone biosynthesis [regulation]. Functionally, is probably a protein kinase regulator of UbiI activity which is involved in aerobic coenzyme Q (ubiquinone) biosynthesis. This is Probable protein kinase UbiB from Shewanella sp. (strain MR-7).